The sequence spans 254 residues: Adenosylcobinamide-GDP ribazoletransferase (254 aa).

Helical transmembrane passes span 27–47 (SSLY…VLLA), 50–70 (GMGV…GLIL), 104–124 (VGSF…ICLL), 131–151 (AYGM…LLAA), 170–190 (AGWP…FVLL), 194–214 (LAPS…VGWL), and 233–253 (LVEA…FWAI).

Belongs to the CobS family. The cofactor is Mg(2+).

It is found in the cell inner membrane. The catalysed reaction is alpha-ribazole + adenosylcob(III)inamide-GDP = adenosylcob(III)alamin + GMP + H(+). It catalyses the reaction alpha-ribazole 5'-phosphate + adenosylcob(III)inamide-GDP = adenosylcob(III)alamin 5'-phosphate + GMP + H(+). The protein operates within cofactor biosynthesis; adenosylcobalamin biosynthesis; adenosylcobalamin from cob(II)yrinate a,c-diamide: step 7/7. Its function is as follows. Joins adenosylcobinamide-GDP and alpha-ribazole to generate adenosylcobalamin (Ado-cobalamin). Also synthesizes adenosylcobalamin 5'-phosphate from adenosylcobinamide-GDP and alpha-ribazole 5'-phosphate. The chain is Adenosylcobinamide-GDP ribazoletransferase from Chlorobaculum tepidum (strain ATCC 49652 / DSM 12025 / NBRC 103806 / TLS) (Chlorobium tepidum).